Here is a 1486-residue protein sequence, read N- to C-terminus: Glutamate synthase [NADPH] large chain (1486 aa).

The propeptide occupies 1–11 (MLYDKSLERDN). The active-site Nucleophile is cysteine 12. The Glutamine amidotransferase type-2 domain occupies 12-402 (CGFGLIAHIE…PGELMVIDTR (391 aa)). 1049 to 1101 (LVETQQALVANGLRHKIRLQVDGGLKTGVDIIKAAILGAESFGFGTGPMVALG) is an FMN binding site. The [3Fe-4S] cluster site is built by cysteine 1102, cysteine 1108, and cysteine 1113.

This sequence belongs to the glutamate synthase family. Aggregate of 4 catalytic active heterodimers, consisting of a large and a small subunit. [3Fe-4S] cluster serves as cofactor. It depends on FAD as a cofactor. FMN is required as a cofactor.

It carries out the reaction 2 L-glutamate + NADP(+) = L-glutamine + 2-oxoglutarate + NADPH + H(+). It functions in the pathway amino-acid biosynthesis; L-glutamate biosynthesis via GLT pathway; L-glutamate from 2-oxoglutarate and L-glutamine (NADP(+) route): step 1/1. It participates in energy metabolism; nitrogen metabolism. In terms of biological role, catalyzes the conversion of L-glutamine and 2-oxoglutarate into two molecules of L-glutamate. This Escherichia coli (strain K12) protein is Glutamate synthase [NADPH] large chain (gltB).